We begin with the raw amino-acid sequence, 186 residues long: Astacin-like metalloprotease toxin 5 (186 aa).

The 186-residue stretch at 1 to 186 (NAVKYDQQLW…CHSKRKAELL (186 aa)) folds into the Peptidase M12A domain. Disulfide bonds link cysteine 42/cysteine 177 and cysteine 63/cysteine 84. Histidine 92 contributes to the Zn(2+) binding site. Glutamate 93 is an active-site residue. Histidine 96 and histidine 102 together coordinate Zn(2+). Residue asparagine 122 is glycosylated (N-linked (GlcNAc...) asparagine).

In terms of assembly, monomer. Zn(2+) serves as cofactor. Expressed by the venom gland.

It is found in the secreted. Inhibited by 1,10-phenanthroline. Functionally, zinc metalloprotease. Provoques deadhesion of endothelial cells from cell cultures, and also degradation of fibronectin, fibrinogen and gelatin in vitro. Its role in the venom is not fully understood but it might act as a spreading factor that facilitates diffusion of other venom toxins. Alternatively, it might be involved in the proteolytic processing of other venom toxins or it might play a role in extra-oral digestion of prey. This Loxosceles gaucho (Spider) protein is Astacin-like metalloprotease toxin 5.